Consider the following 105-residue polypeptide: Iron-sulfur cluster assembly protein CyaY (105 aa).

The protein belongs to the frataxin family.

In terms of biological role, involved in iron-sulfur (Fe-S) cluster assembly. May act as a regulator of Fe-S biogenesis. This Paraburkholderia xenovorans (strain LB400) protein is Iron-sulfur cluster assembly protein CyaY.